The chain runs to 114 residues: Anti-adapter protein IraM (114 aa).

It belongs to the IraM/RssC family.

The protein resides in the cytoplasm. Its function is as follows. Involved in the stabilization of the sigma stress factor RpoS. In Citrobacter koseri (strain ATCC BAA-895 / CDC 4225-83 / SGSC4696), this protein is Anti-adapter protein IraM.